Here is a 633-residue protein sequence, read N- to C-terminus: DNA mismatch repair protein MutL (633 aa).

It belongs to the DNA mismatch repair MutL/HexB family.

In terms of biological role, this protein is involved in the repair of mismatches in DNA. It is required for dam-dependent methyl-directed DNA mismatch repair. May act as a 'molecular matchmaker', a protein that promotes the formation of a stable complex between two or more DNA-binding proteins in an ATP-dependent manner without itself being part of a final effector complex. In Pseudomonas fluorescens (strain SBW25), this protein is DNA mismatch repair protein MutL.